We begin with the raw amino-acid sequence, 488 residues long: Germacrene A hydroxylase (488 aa).

Residues 1 to 6 lie on the Cytoplasmic side of the membrane; the sequence is MELSFT. A helical; Signal-anchor for type II membrane protein membrane pass occupies residues 7-23; that stretch reads TSIAVATIVFVLFKLAT. Residues 24–488 lie on the Lumenal side of the membrane; the sequence is RPKSNKKLLP…KTHLVLVPSF (465 aa). 3 N-linked (GlcNAc...) asparagine glycosylation sites follow: Asn-255, Asn-260, and Asn-379. A heme-binding site is contributed by Cys-432.

This sequence belongs to the cytochrome P450 family. It depends on heme as a cofactor.

It is found in the endoplasmic reticulum membrane. It catalyses the reaction (+)-(R)-germacrene A + 3 reduced [NADPH--hemoprotein reductase] + 3 O2 = germacra-1(10),4,11(13)-trien-12-oate + 3 oxidized [NADPH--hemoprotein reductase] + 4 H2O + 4 H(+). Its pathway is secondary metabolite biosynthesis; terpenoid biosynthesis. Its function is as follows. Involved in the biosynthesis of germacrene-derived sesquiterpene lactones. Catalyzes three consecutive oxidations of germacrene A to produce germacrene A acid. Could also catalyze the three-step oxidation of non-natural substrate amorphadiene to artemisinic acid. In Saussurea costus (Costus), this protein is Germacrene A hydroxylase.